Reading from the N-terminus, the 207-residue chain is Small ribosomal subunit protein uS4 (207 aa).

Positions 20–45 (TPKAARYMEKRPYAPGEHGRTKRKAD) are disordered. The region spanning 93–158 (MRLDALVLRA…TEPFQVAAAG (66 aa)) is the S4 RNA-binding domain.

This sequence belongs to the universal ribosomal protein uS4 family. Part of the 30S ribosomal subunit. Contacts protein S5. The interaction surface between S4 and S5 is involved in control of translational fidelity.

In terms of biological role, one of the primary rRNA binding proteins, it binds directly to 16S rRNA where it nucleates assembly of the body of the 30S subunit. With S5 and S12 plays an important role in translational accuracy. This is Small ribosomal subunit protein uS4 from Leifsonia xyli subsp. xyli (strain CTCB07).